Here is a 290-residue protein sequence, read N- to C-terminus: PIH1 domain-containing protein 1 (290 aa).

The span at 34–50 shows a compositional bias: polar residues; it reads ELQQAQTSRPESTQIQP. The interval 34–53 is disordered; it reads ELQQAQTSRPESTQIQPQPG. Serine 173 carries the post-translational modification Phosphoserine.

It belongs to the PIH1 family. In terms of assembly, component of the R2TP complex composed at least of RUVBL1, RUVBL2, RPAP3 and PIHD1. Component of the PAQosome complex which is responsible for the biogenesis of several protein complexes and which consists of R2TP complex members RUVBL1, RUVBL2, RPAP3 and PIH1D1, URI complex members PFDN2, PFDN6, PDRG1, UXT and URI1 as well as ASDURF, POLR2E and DNAAF10/WDR92. Interacts with phosphorylated TELO2 and mediates interaction of TELO2 with the R2TP complex. Interacts with phosphorylated ECD, EFTUD2/SNRP116, RPB1 and UBR5 and with RPB1 in a phosphorylation-independent manner. Interacts with the core C/D box snoRNP particle components NOP58 and FBL and with RUVBL1/TIP49. Interacts with RPAP3 and DNAAF10. Interacts with histone H4 and with SWI/SNF complex member SMARCB1/SNF5. Interacts with the mTORC1 complex member RPTOR. Interacts with MSL1.

It is found in the nucleus. Its function is as follows. Involved in the assembly of C/D box small nucleolar ribonucleoprotein (snoRNP) particles. Recruits the SWI/SNF complex to the core promoter of rRNA genes and enhances pre-rRNA transcription. Mediates interaction of TELO2 with the R2TP complex which is necessary for the stability of MTOR and SMG1. Positively regulates the assembly and activity of the mTORC1 complex. The protein is PIH1 domain-containing protein 1 (PIH1D1) of Bos taurus (Bovine).